Here is a 92-residue protein sequence, read N- to C-terminus: Acylphosphatase (92 aa).

The Acylphosphatase-like domain occupies 5-92 (YIVAYVYGVV…TPFETFSIRY (88 aa)). Residues R20 and N38 contribute to the active site.

Belongs to the acylphosphatase family.

The catalysed reaction is an acyl phosphate + H2O = a carboxylate + phosphate + H(+). In Yersinia pseudotuberculosis serotype O:1b (strain IP 31758), this protein is Acylphosphatase (acyP).